The chain runs to 425 residues: Serine--tRNA ligase (425 aa).

233 to 235 (TAE) contributes to the L-serine binding site. An ATP-binding site is contributed by 264–266 (RAE). Glu287 contacts L-serine. 351 to 354 (EISS) provides a ligand contact to ATP. Ser387 lines the L-serine pocket.

This sequence belongs to the class-II aminoacyl-tRNA synthetase family. Type-1 seryl-tRNA synthetase subfamily. In terms of assembly, homodimer. The tRNA molecule binds across the dimer.

It localises to the cytoplasm. It catalyses the reaction tRNA(Ser) + L-serine + ATP = L-seryl-tRNA(Ser) + AMP + diphosphate + H(+). The enzyme catalyses tRNA(Sec) + L-serine + ATP = L-seryl-tRNA(Sec) + AMP + diphosphate + H(+). The protein operates within aminoacyl-tRNA biosynthesis; selenocysteinyl-tRNA(Sec) biosynthesis; L-seryl-tRNA(Sec) from L-serine and tRNA(Sec): step 1/1. Catalyzes the attachment of serine to tRNA(Ser). Is also able to aminoacylate tRNA(Sec) with serine, to form the misacylated tRNA L-seryl-tRNA(Sec), which will be further converted into selenocysteinyl-tRNA(Sec). The protein is Serine--tRNA ligase of Clostridium botulinum (strain Eklund 17B / Type B).